Reading from the N-terminus, the 5405-residue chain is IgGFc-binding protein (5405 aa).

The signal sequence occupies residues 1-23; the sequence is MGALWSWWILWAGATLLWGLTQE. Residues 24-450 are igGFc-binding; that stretch reads ASVDLKNTGR…EPSCEGMQCA (427 aa). Residues asparagine 75 and asparagine 91 are each glycosylated (N-linked (GlcNAc...) asparagine). The region spanning 470 to 650 is the VWFD 1 domain; sequence AVCRAQGDPH…KLDDGDYLCE (181 aa). Intrachain disulfides connect cysteine 472–cysteine 611 and cysteine 494–cysteine 649. Positions 745 to 799 constitute a TIL 1 domain; that stretch reads CPANSRYELCGPACPTSCNGAAAPSNCSGRPCVEGCVCLPGFVASGGACVPASSC. In terms of domain architecture, VWFD 2 spans 862–1041; sequence GTCQGSGDPH…WQEETRPGCG (180 aa). 2 disulfides stabilise this stretch: cysteine 864–cysteine 1003 and cysteine 886–cysteine 1040. The region spanning 1136-1189 is the TIL 2 domain; the sequence is CPPHSHYEACSYGCPLSCGDLPVPGGCGSECHEGCVCDEGFALSGESCLPLASC. In terms of domain architecture, VWFD 3 spans 1250-1429; that stretch reads STCQASGDPH…EEVVPDSPCL (180 aa). 2 cysteine pairs are disulfide-bonded: cysteine 1252–cysteine 1390 and cysteine 1274–cysteine 1428. Asparagine 1317 carries an N-linked (GlcNAc...) (complex) asparagine glycan. The region spanning 1532-1585 is the TIL 3 domain; it reads CPPNSHYELCADTCSLGCSALSAPPQCQDGCAEGCQCDSGFLYNGQACVPIQQC. A VWFD 4 domain is found at 1671–1854; that stretch reads ATCWLWGDPH…RAPGWDPLCW (184 aa). Intrachain disulfides connect cysteine 1673–cysteine 1815, cysteine 1695–cysteine 1853, and cysteine 1704–cysteine 1812. Asparagine 1743 carries N-linked (GlcNAc...) asparagine glycosylation. Positions 1950 to 2007 constitute a TIL 4 domain; that stretch reads CPENSHYEVCGSPCPASCPSPAPLTTPAVCEGPCVEGCQCDAGFVLSADRCVPLNNGC. In terms of domain architecture, VWFD 5 spans 2070–2253; sequence AECQAWGDPH…VSKPCPSPCT (184 aa). 2 disulfide bridges follow: cysteine 2072-cysteine 2211 and cysteine 2094-cysteine 2252. An N-linked (GlcNAc...) asparagine glycan is attached at asparagine 2138. A TIL 5 domain is found at 2337-2390; it reads CPAHSHYELCGDSCPGSCPSLSAPEGCESACREGCVCDAGFVLSGDTCVPVGQC. The region spanning 2451–2630 is the VWFD 6 domain; it reads TTCQASGDPH…EEVVPDSPCL (180 aa). Intrachain disulfides connect cysteine 2453-cysteine 2591 and cysteine 2475-cysteine 2629. N-linked (GlcNAc...) asparagine glycosylation is present at asparagine 2518. The TIL 6 domain maps to 2733 to 2786; that stretch reads CPQNSHYELCADTCSLGCSALSAPLQCPDGCAEGCQCDSGFLYNGQACVPIQQC. The VWFD 7 domain occupies 2872-3055; that stretch reads ATCWLWGDPH…RAPGWDPLCW (184 aa). Cystine bridges form between cysteine 2874–cysteine 3016, cysteine 2896–cysteine 3054, and cysteine 2905–cysteine 3013. The TIL 7 domain occupies 3151-3208; sequence CPENSHYEVCGPPCPASCPSPAPLTTPAVCEGPCVEGCQCDAGFVLSADRCVPLNNGC. The 184-residue stretch at 3271-3454 folds into the VWFD 8 domain; the sequence is AECQAWGDPH…VSKPCPSPCT (184 aa). 2 disulfides stabilise this stretch: cysteine 3273/cysteine 3412 and cysteine 3295/cysteine 3453. The 54-residue stretch at 3538 to 3591 folds into the TIL 8 domain; it reads CPAHSHYELCGDSCPGSCPSLSAPEGCESACREGCVCDAGFVLSGDTCVPVGQC. The 180-residue stretch at 3652 to 3831 folds into the VWFD 9 domain; sequence TTCQASGDPH…EEVVPDSPCL (180 aa). 2 cysteine pairs are disulfide-bonded: cysteine 3654/cysteine 3792 and cysteine 3676/cysteine 3830. A glycan (N-linked (GlcNAc...) asparagine) is linked at asparagine 3719. Positions 3934–3987 constitute a TIL 9 domain; it reads CPQNSHYELCADTCSLGCSALSAPLQCPDGCAEGCQCDSGFLYNGQACVPIQQC. A VWFD 10 domain is found at 4073-4256; that stretch reads ATCWLWGDPH…RAPGWDPLCW (184 aa). Intrachain disulfides connect cysteine 4075/cysteine 4217, cysteine 4097/cysteine 4255, and cysteine 4106/cysteine 4214. Residue asparagine 4145 is glycosylated (N-linked (GlcNAc...) asparagine). The TIL 10 domain occupies 4352–4409; the sequence is CPENSHYEVCGPPCPASCPSPAPLTTPAVCEGPCVEGCQCDAGFVLSADRCVPLNNGC. The region spanning 4472-4655 is the VWFD 11 domain; the sequence is AECQAWGDPH…VSKPCPSPCT (184 aa). Disulfide bonds link cysteine 4474–cysteine 4613 and cysteine 4496–cysteine 4654. N-linked (GlcNAc...) asparagine glycosylation is present at asparagine 4540. The 54-residue stretch at 4739 to 4792 folds into the TIL 11 domain; the sequence is CPAHSHYELCGDSCPVSCPSLSAPEGCESACREGCVCDAGFVLSGDTCVPVGQC. The region spanning 4854–5025 is the VWFD 12 domain; the sequence is GRCLANGGIH…RAPGSSKGCG (172 aa). Disulfide bonds link cysteine 4856–cysteine 4986 and cysteine 4878–cysteine 5024. The 54-residue stretch at 5121-5174 folds into the TIL 12 domain; it reads CPAHSHYSICTRTCQGSCAALSGLTGCTTRCFEGCECDDRFLLSQGVCIPVQDC. The VWFD 13 domain occupies 5233–5404; it reads GLCVLSVGAN…WRAQDFSPCY (172 aa). The cysteines at positions 5235 and 5372 are disulfide-linked.

In terms of assembly, interacts with the Fc portion of IgG and with MUC2. As to expression, mainly expressed in placenta and colon epithelium. Expressed in thyroid, and down-regulated in thyroid carcinomas. Present in serum, with higher levels in patients with various autoimmune diseases (at protein level).

The protein resides in the secreted. Functionally, may be involved in the maintenance of the mucosal structure as a gel-like component of the mucosa. In Homo sapiens (Human), this protein is IgGFc-binding protein (FCGBP).